Consider the following 319-residue polypeptide: Lambda-crystallin homolog (319 aa).

A2 is modified (N-acetylalanine). Phosphoserine is present on S3. Residues 16 to 17 (VI), D36, E97, and K102 each bind NAD(+). S111 is modified (phosphoserine).

Belongs to the 3-hydroxyacyl-CoA dehydrogenase family. Homodimer. In terms of tissue distribution, widely expressed, with highest levels in liver and kidney.

Its subcellular location is the cytoplasm. The catalysed reaction is L-gulonate + NAD(+) = 3-dehydro-L-gulonate + NADH + H(+). With respect to regulation, inhibited by malonate. In terms of biological role, has high L-gulonate 3-dehydrogenase activity. It also exhibits low dehydrogenase activity toward L-3-hydroxybutyrate (HBA) and L-threonate. The chain is Lambda-crystallin homolog (CRYL1) from Homo sapiens (Human).